A 140-amino-acid polypeptide reads, in one-letter code: Protein SamA (140 aa).

Catalysis depends on for autocatalytic cleavage activity residues Ser-61 and Lys-98.

The protein belongs to the peptidase S24 family.

Functionally, involved in UV protection and mutation. This chain is Protein SamA (samA), found in Salmonella typhimurium (strain LT2 / SGSC1412 / ATCC 700720).